A 558-amino-acid chain; its full sequence is Membrane protein insertase YidC (558 aa).

5 helical membrane passes run 3-23, 364-384, 438-458, 477-497, and 508-528; these read IKRTVLWVIFFMSAVMLFDNW, FVGNWGWAIVLLTLLIKAVFF, LPVVIQIPVFISLYWVLLASV, PYFILPVLMAVSMFVQTKLNP, and MMFMPIAFSVMFFFFPAGLVL.

It belongs to the OXA1/ALB3/YidC family. Type 1 subfamily. As to quaternary structure, interacts with the Sec translocase complex via SecD. Specifically interacts with transmembrane segments of nascent integral membrane proteins during membrane integration.

Its subcellular location is the cell inner membrane. Its function is as follows. Required for the insertion and/or proper folding and/or complex formation of integral membrane proteins into the membrane. Involved in integration of membrane proteins that insert both dependently and independently of the Sec translocase complex, as well as at least some lipoproteins. Aids folding of multispanning membrane proteins. The chain is Membrane protein insertase YidC from Burkholderia mallei (strain NCTC 10247).